The following is a 273-amino-acid chain: Ribosomal RNA small subunit methyltransferase A (273 aa).

S-adenosyl-L-methionine contacts are provided by Asn-20, Leu-22, Gly-47, Glu-68, Asp-90, and Asn-110.

The protein belongs to the class I-like SAM-binding methyltransferase superfamily. rRNA adenine N(6)-methyltransferase family. RsmA subfamily.

The protein resides in the cytoplasm. It carries out the reaction adenosine(1518)/adenosine(1519) in 16S rRNA + 4 S-adenosyl-L-methionine = N(6)-dimethyladenosine(1518)/N(6)-dimethyladenosine(1519) in 16S rRNA + 4 S-adenosyl-L-homocysteine + 4 H(+). Its function is as follows. Specifically dimethylates two adjacent adenosines (A1518 and A1519) in the loop of a conserved hairpin near the 3'-end of 16S rRNA in the 30S particle. May play a critical role in biogenesis of 30S subunits. The chain is Ribosomal RNA small subunit methyltransferase A from Chlorobium luteolum (strain DSM 273 / BCRC 81028 / 2530) (Pelodictyon luteolum).